Here is a 270-residue protein sequence, read N- to C-terminus: Putative pyruvate, phosphate dikinase regulatory protein 2 (270 aa).

151 to 158 (GVSRTSKT) provides a ligand contact to ADP.

Belongs to the pyruvate, phosphate/water dikinase regulatory protein family. PDRP subfamily.

It catalyses the reaction N(tele)-phospho-L-histidyl/L-threonyl-[pyruvate, phosphate dikinase] + ADP = N(tele)-phospho-L-histidyl/O-phospho-L-threonyl-[pyruvate, phosphate dikinase] + AMP + H(+). It carries out the reaction N(tele)-phospho-L-histidyl/O-phospho-L-threonyl-[pyruvate, phosphate dikinase] + phosphate + H(+) = N(tele)-phospho-L-histidyl/L-threonyl-[pyruvate, phosphate dikinase] + diphosphate. Its function is as follows. Bifunctional serine/threonine kinase and phosphorylase involved in the regulation of the pyruvate, phosphate dikinase (PPDK) by catalyzing its phosphorylation/dephosphorylation. This is Putative pyruvate, phosphate dikinase regulatory protein 2 from Listeria monocytogenes serovar 1/2a (strain ATCC BAA-679 / EGD-e).